Consider the following 714-residue polypeptide: NCK-interacting protein with SH3 domain (714 aa).

One can recognise an SH3 domain in the interval 1–58; it reads MYRALYAFRSAEPNAMAFAAGETFLVLERSSTHWWLAARARSGETGYVPPAYLHRLQG. Disordered regions lie at residues 103–126 and 139–298; these read TLSR…DHHL and RTGF…AAET. Over residues 106–121 the composition is skewed to polar residues; that stretch reads RRGTSASSATVMTPST. Ser-120 bears the Phosphoserine mark. A Nuclear localization signal motif is present at residues 168–185; that stretch reads RRAAPTTPPPPVKRRDRE. Thr-174 is subject to Phosphothreonine. Over residues 200–215 the composition is skewed to low complexity; the sequence is SGGSSVSSGSSASSTS. Residues 216 to 226 are compositionally biased toward polar residues; sequence MDTLYTGSSPS. Residues 252 to 263 are compositionally biased toward pro residues; it reads QPSPSKAPSPEP. Residues Ser-260, Ser-286, and Ser-673 each carry the phosphoserine modification.

As to quaternary structure, associates with the intermediate filaments, vimentin and desmin. Binds the first and third SH3 domains of NCK. Binds the proline-rich domains of N-WASP through its SH3 domain. Similarly, binds diaphanous protein homolog 1 (DRF1). Binds the SH3 domains of GRB2 through its proline-rich domains. Interacts with FASLG.

The protein resides in the nucleus. In terms of biological role, has an important role in stress fiber formation induced by active diaphanous protein homolog 1 (DRF1). Induces microspike formation, in vivo. In vitro, stimulates N-WASP-induced ARP2/3 complex activation in the absence of CDC42. May play an important role in the maintenance of sarcomere and/or in the assembly of myofibrils into sarcomeres. Implicated in regulation of actin polymerization and cell adhesion. In Mus musculus (Mouse), this protein is NCK-interacting protein with SH3 domain (Nckipsd).